The chain runs to 91 residues: Small ribosomal subunit protein bS20 (91 aa).

The disordered stretch occupies residues 1–23; that stretch reads MANTPSAKKRAKQAEKRRSHNAS. Basic residues predominate over residues 7 to 20; that stretch reads AKKRAKQAEKRRSH.

Belongs to the bacterial ribosomal protein bS20 family.

Its function is as follows. Binds directly to 16S ribosomal RNA. This Pseudomonas paraeruginosa (strain DSM 24068 / PA7) (Pseudomonas aeruginosa (strain PA7)) protein is Small ribosomal subunit protein bS20.